We begin with the raw amino-acid sequence, 212 residues long: Ribonuclease HII (212 aa).

An RNase H type-2 domain is found at 1–199 (MIGGIDEAGR…VGGRIGLGRN (199 aa)). Aspartate 6, glutamate 7, and aspartate 101 together coordinate a divalent metal cation.

This sequence belongs to the RNase HII family. Mn(2+) serves as cofactor. It depends on Mg(2+) as a cofactor.

Its subcellular location is the cytoplasm. It carries out the reaction Endonucleolytic cleavage to 5'-phosphomonoester.. In terms of biological role, endonuclease that specifically degrades the RNA of RNA-DNA hybrids. The protein is Ribonuclease HII of Pyrobaculum aerophilum (strain ATCC 51768 / DSM 7523 / JCM 9630 / CIP 104966 / NBRC 100827 / IM2).